A 193-amino-acid polypeptide reads, in one-letter code: Large ribosomal subunit protein uL18 (193 aa).

Belongs to the universal ribosomal protein uL18 family. In terms of assembly, part of the 50S ribosomal subunit. Contacts the 5S and 23S rRNAs.

Its function is as follows. This is one of the proteins that bind and probably mediate the attachment of the 5S RNA into the large ribosomal subunit, where it forms part of the central protuberance. This chain is Large ribosomal subunit protein uL18, found in Methanococcus vannielii (strain ATCC 35089 / DSM 1224 / JCM 13029 / OCM 148 / SB).